Here is a 391-residue protein sequence, read N- to C-terminus: Mannonate dehydratase (391 aa).

This sequence belongs to the mannonate dehydratase family. Fe(2+) is required as a cofactor. The cofactor is Mn(2+).

It catalyses the reaction D-mannonate = 2-dehydro-3-deoxy-D-gluconate + H2O. The protein operates within carbohydrate metabolism; pentose and glucuronate interconversion. Functionally, catalyzes the dehydration of D-mannonate. The sequence is that of Mannonate dehydratase from Marinomonas sp. (strain MWYL1).